A 642-amino-acid polypeptide reads, in one-letter code: 1,4-alpha-glucan branching enzyme GlgB (642 aa).

Catalysis depends on Asp-304, which acts as the Nucleophile. The Proton donor role is filled by Glu-355.

Belongs to the glycosyl hydrolase 13 family. GlgB subfamily. In terms of assembly, monomer.

It carries out the reaction Transfers a segment of a (1-&gt;4)-alpha-D-glucan chain to a primary hydroxy group in a similar glucan chain.. Its pathway is glycan biosynthesis; glycogen biosynthesis. Functionally, catalyzes the formation of the alpha-1,6-glucosidic linkages in glycogen by scission of a 1,4-alpha-linked oligosaccharide from growing alpha-1,4-glucan chains and the subsequent attachment of the oligosaccharide to the alpha-1,6 position. In Streptococcus pneumoniae serotype 4 (strain ATCC BAA-334 / TIGR4), this protein is 1,4-alpha-glucan branching enzyme GlgB.